The chain runs to 246 residues: Probable aquaporin AqpM (246 aa).

Topologically, residues 1-12 (MTMTLAKRFTAE) are cytoplasmic. A helical transmembrane segment spans residues 13–33 (VVGTFILVFFGPGAAVITLMI). The Extracellular segment spans residues 34 to 56 (ANGADKPNEFNIGIGALGGLGDW). Residues 57–77 (FAIGMAFALAIAAVIYSLGRI) traverse the membrane as a helical segment. Over 78–104 (SGAHINPAVTIALWSIGRFPGREVVPY) the chain is Cytoplasmic. An NPA 1 motif is present at residues 83–85 (NPA). Residues 105–125 (IVAQFIGAALGSLLFLACVGP) traverse the membrane as a helical segment. The Extracellular segment spans residues 126–146 (AAATVGGLGATAPFPGIGYGQ). Residues 147–167 (AILTEAIGTFLLMLVIMGVAV) form a helical membrane-spanning segment. Residues 168–173 (DERAPP) are Cytoplasmic-facing. A helical transmembrane segment spans residues 174-194 (GFAGLVIGLTVGGIITTIGNI). Residues 195–217 (TGSSLNPARTFGPYLGDSLMGIN) are Extracellular-facing. The NPA 2 signature appears at 200–202 (NPA). Residues 218–238 (LWQYFPIYVIGPIVGAVAAAW) form a helical membrane-spanning segment. The Cytoplasmic portion of the chain corresponds to 239–246 (LYNYLAKE).

The protein belongs to the MIP/aquaporin (TC 1.A.8) family.

Its subcellular location is the cell membrane. Its function is as follows. Channel that permits osmotically driven movement of water in both directions. The protein is Probable aquaporin AqpM (aqpM) of Archaeoglobus fulgidus (strain ATCC 49558 / DSM 4304 / JCM 9628 / NBRC 100126 / VC-16).